We begin with the raw amino-acid sequence, 950 residues long: Synaptotagmin-like protein 2 (950 aa).

The RabBD domain occupies methionine 1 to alanine 57. Disordered stretches follow at residues arginine 78–serine 98, valine 116–arginine 289, and glutamate 361–glycine 620. The span at glutamine 87 to glutamate 97 shows a compositional bias: basic and acidic residues. Composition is skewed to polar residues over residues isoleucine 140 to proline 150 and leucine 173 to threonine 183. The span at lysine 193–serine 205 shows a compositional bias: basic and acidic residues. Residues glutamine 219–histidine 230 are compositionally biased toward polar residues. Over residues asparagine 246–leucine 264 the composition is skewed to basic and acidic residues. The segment covering valine 434–glutamate 445 has biased composition (polar residues). Basic and acidic residues-rich tracts occupy residues histidine 479 to arginine 502 and glutamate 531 to glutamine 544. Over residues threonine 557–serine 567 the composition is skewed to polar residues. Low complexity predominate over residues serine 608–glycine 620. C2 domains lie at valine 644–tyrosine 769 and asparagine 784–methionine 913.

As to quaternary structure, monomer. Binds NRXN1. Binds RAB27A that has been activated by GTP-binding. Interacts with RAB27B. In terms of processing, isoform 1 is highly susceptible to proteolytic degradation and is stabilized by the interaction with RAB27A. In terms of tissue distribution, highly expressed in brain, lung, kidney, testis and in embryos after day 7. Detected at lower levels in skeletal muscle. Expressed in pancreatic alpha cells. Isoform 6 is highly expressed in brain, but not detectable in the other tissues tested. Isoform 1 is expressed abundantly in the stomach and is predominantly localized at the apical region of gastric-surface mucus cells. Isoform 11 is expressed in cytotoxic T-lymphocytes (CTL).

It is found in the melanosome membrane. The protein localises to the cell membrane. Functionally, isoform 11 acts as a RAB27A effector protein and plays a role in cytotoxic granule exocytosis in lymphocytes. Required for cytotoxic granule docking at the immunologic synapse. Isoform 1 may play a role in melanosome transport and vesicle trafficking. It controls melanosome distribution in the cell periphery and regulates melanocyte morphology. Isoform 1 acts as a positive mediator of mucus secretion by the surface mucus cells of the stomach. Mediates basal mucus secretion by gastric surface cells by promoting the proper granule biognesis and docking of mucus granules with the apical plasma membrane. In Mus musculus (Mouse), this protein is Synaptotagmin-like protein 2 (Sytl2).